A 222-amino-acid chain; its full sequence is Adenylate kinase (222 aa).

S2 is a propeptide (removed in mature form). 2 positions are modified to N-acetylserine: S2 and S3. 16–21 (GAGKGT) is an ATP binding site. Residues 36–65 (ATGDMLRSQIAKGTQLGLEAKKIMDQGGLV) are NMP. AMP-binding positions include T37, R42, 63–65 (GLV), 92–95 (GFPR), and Q99. The tract at residues 133–170 (GRLIHPASGRSYHKIFNPPKEDMKDDVTGEALVQRSDD) is LID. Residues R134 and 143–144 (SY) contribute to the ATP site. AMP is bound by residues R167 and R178. Q206 contacts ATP.

This sequence belongs to the adenylate kinase family. AK2 subfamily. As to quaternary structure, monomer.

It is found in the cytoplasm. Its subcellular location is the cytosol. The protein localises to the mitochondrion intermembrane space. It catalyses the reaction AMP + ATP = 2 ADP. Catalyzes the reversible transfer of the terminal phosphate group between ATP and AMP. Plays an important role in cellular energy homeostasis and in adenine nucleotide metabolism. Adenylate kinase activity is critical for regulation of the phosphate utilization and the AMP de novo biosynthesis pathways. This Saccharomyces cerevisiae (strain YJM789) (Baker's yeast) protein is Adenylate kinase.